The primary structure comprises 725 residues: Malate synthase G 2 (725 aa).

Residues Val-118, 125–126, Ser-276, and Arg-313 contribute to the acetyl-CoA site; that span reads RY. Arg-340 serves as the catalytic Proton acceptor. Residues Arg-340, Glu-429, and 454–457 each bind glyoxylate; that span reads GFLD. The Mg(2+) site is built by Glu-429 and Asp-457. Pro-538 contacts acetyl-CoA. Cysteine sulfenic acid (-SOH) is present on Cys-619. Asp-633 (proton donor) is an active-site residue.

Belongs to the malate synthase family. GlcB subfamily. Monomer. Requires Mg(2+) as cofactor.

The protein resides in the cytoplasm. The enzyme catalyses glyoxylate + acetyl-CoA + H2O = (S)-malate + CoA + H(+). Its pathway is carbohydrate metabolism; glyoxylate cycle; (S)-malate from isocitrate: step 2/2. Involved in the glycolate utilization. Catalyzes the condensation and subsequent hydrolysis of acetyl-coenzyme A (acetyl-CoA) and glyoxylate to form malate and CoA. This Pseudomonas syringae pv. tomato (strain ATCC BAA-871 / DC3000) protein is Malate synthase G 2.